A 542-amino-acid polypeptide reads, in one-letter code: Quinidine resistance protein 2 (542 aa).

At 1–67 the chain is on the cytoplasmic side; that stretch reads MAGATSSIIR…SFKTVLIAQC (67 aa). A Phosphoserine modification is found at S21. T38 carries the phosphothreonine modification. At S40 the chain carries Phosphoserine. The helical transmembrane segment at 68 to 88 threads the bilayer; that stretch reads AFTGFFSTIAGAIYYPVLSVI. Residues 89 to 100 lie on the Extracellular side of the membrane; that stretch reads ERKFDIDEELVN. Residues 101 to 121 form a helical membrane-spanning segment; that stretch reads VTVVVYFVFQGLAPTFMGGFA. At 122 to 127 the chain is on the cytoplasmic side; it reads DSLGRR. A helical membrane pass occupies residues 128–148; it reads PVVLVAIVIYFGACIGLACAQ. T149 is a topological domain (extracellular). Residues 150 to 170 form a helical membrane-spanning segment; sequence YAQIIVLRCLQAAGISPVIAI. Residues 171 to 187 are Cytoplasmic-facing; sequence NSGIMGDVTTRAERGGY. A helical transmembrane segment spans residues 188–208; that stretch reads VGYVAGFQVLGSAFGALIGAG. The Extracellular segment spans residues 209 to 216; that stretch reads LSSRWGWR. A helical membrane pass occupies residues 217-237; sequence AIFWFLAIGSGICFLASFLIL. Residues 238–300 are Cytoplasmic-facing; sequence PETKRNISGN…APFKILKAYE (63 aa). Residues 301–321 form a helical membrane-spanning segment; that stretch reads ICILMLVAGLQFAMYTTHLTA. At 322 to 333 the chain is on the extracellular side; it reads LSTALSKQYHLT. Residues 334–354 traverse the membrane as a helical segment; the sequence is VAKVGLCYLPSGICTLCSIVI. Residues 355–413 lie on the Cytoplasmic side of the membrane; it reads AGRYLNWNYRRRLKYYQNWLGKKRSKLLEEHDNDLNLVQRIIENDPKYTFNIFKARLQP. The chain crosses the membrane as a helical span at residues 414–434; that stretch reads AFVTLLLSSSGFCAYGWCITV. The Extracellular segment spans residues 435–437; that stretch reads KAP. The chain crosses the membrane as a helical span at residues 438 to 458; the sequence is LAAVLCMSGFASLFSNCILTF. Topologically, residues 459-472 are cytoplasmic; the sequence is STTLIVDLFPTKTS. The helical transmembrane segment at 473–493 threads the bilayer; that stretch reads TATGCLNLFRCILSAVFIAAL. At 494-503 the chain is on the extracellular side; it reads SKMVEKMKFG. A helical membrane pass occupies residues 504 to 524; that stretch reads GVFTFLGALTSSSSILLFILL. Topologically, residues 525 to 542 are cytoplasmic; it reads RKGKELAFKRKKQELGVN.

It belongs to the major facilitator superfamily. CAR1 family.

It is found in the cell membrane. Multidrug resistance transporter involved in resistance and adaptation to quinidine and to the herbicide barban (4-chloro-2-butynyl [3-chlorophenyl] carbamate). Implicated in potassium uptake. This Saccharomyces cerevisiae (strain ATCC 204508 / S288c) (Baker's yeast) protein is Quinidine resistance protein 2 (QDR2).